The primary structure comprises 427 residues: Trigger factor (427 aa).

One can recognise a PPIase FKBP-type domain in the interval 163-248 (GDTVVIDFVG…IHEVKAKEVP (86 aa)).

The protein belongs to the FKBP-type PPIase family. Tig subfamily.

The protein localises to the cytoplasm. The catalysed reaction is [protein]-peptidylproline (omega=180) = [protein]-peptidylproline (omega=0). Its function is as follows. Involved in protein export. Acts as a chaperone by maintaining the newly synthesized protein in an open conformation. Functions as a peptidyl-prolyl cis-trans isomerase. The polypeptide is Trigger factor (Streptococcus pneumoniae (strain ATCC 700669 / Spain 23F-1)).